Consider the following 1616-residue polypeptide: Vitellogenin-1 (1616 aa).

The signal sequence occupies residues methionine 1 to alanine 19. The 666-residue stretch at phenylalanine 24–leucine 689 folds into the Vitellogenin domain. The N-linked (GlcNAc...) asparagine glycan is linked to asparagine 1270. The VWFD domain occupies serine 1310–glutamate 1479. Intrachain disulfides connect cysteine 1312–cysteine 1442 and cysteine 1334–cysteine 1478. Residues serine 1505–glutamine 1514 show a composition bias toward acidic residues. Residues serine 1505–aspartate 1531 are disordered.

In terms of tissue distribution, expressed in the intestine of adult hermaphrodites.

It localises to the secreted. Precursor of the egg-yolk proteins that are sources of nutrients during embryonic development. Together with other vitellogenins, may play a role in modulating life-span, acting via induction of autophagy and lysosomal lipolysis. In Caenorhabditis elegans, this protein is Vitellogenin-1 (vit-1).